The following is a 290-amino-acid chain: Probable endonuclease 4 (290 aa).

Zn(2+) is bound by residues His66, His106, Glu143, Asp179, His182, His216, Asp229, His231, and Glu261.

It belongs to the AP endonuclease 2 family. It depends on Zn(2+) as a cofactor.

It carries out the reaction Endonucleolytic cleavage to 5'-phosphooligonucleotide end-products.. Its function is as follows. Endonuclease IV plays a role in DNA repair. It cleaves phosphodiester bonds at apurinic or apyrimidinic (AP) sites, generating a 3'-hydroxyl group and a 5'-terminal sugar phosphate. This is Probable endonuclease 4 from Solibacter usitatus (strain Ellin6076).